A 170-amino-acid polypeptide reads, in one-letter code: Ureidoglycolate lyase 1 (170 aa).

The protein belongs to the ureidoglycolate lyase family. In terms of assembly, homodimer. Ni(2+) serves as cofactor.

The enzyme catalyses (S)-ureidoglycolate = urea + glyoxylate. It functions in the pathway nitrogen metabolism; (S)-allantoin degradation. In terms of biological role, catalyzes the catabolism of the allantoin degradation intermediate (S)-ureidoglycolate, generating urea and glyoxylate. Involved in the utilization of allantoin as nitrogen source. The sequence is that of Ureidoglycolate lyase 1 from Rhizobium meliloti (strain 1021) (Ensifer meliloti).